The primary structure comprises 626 residues: Chaperone protein HtpG (626 aa).

The segment at 1–343 (MHKQTLSFQA…SADLPLNVSR (343 aa)) is a; substrate-binding. Residues 344-558 (ELLQESRAVK…DGDMSTQLAR (215 aa)) are b. Residues 559 to 626 (MLKQAGQAVP…YVKRVNALLV (68 aa)) are c.

It belongs to the heat shock protein 90 family. Homodimer.

The protein resides in the cytoplasm. In terms of biological role, molecular chaperone. Has ATPase activity. This Polaromonas sp. (strain JS666 / ATCC BAA-500) protein is Chaperone protein HtpG.